A 280-amino-acid polypeptide reads, in one-letter code: Vitamin B12-binding protein (280 aa).

Positions 1-27 are cleaved as a signal peptide; sequence MMPLGLFPLPRAAAVLLISLLTLPAQA. The Fe/B12 periplasmic-binding domain maps to 30 to 277; sequence RVISLSPSTT…QMASIPTPVA (248 aa). Position 57 (Tyr57) interacts with cyanocob(III)alamin. Cysteines 190 and 266 form a disulfide.

The protein belongs to the BtuF family. The complex is composed of two ATP-binding proteins (BtuD), two transmembrane proteins (BtuC) and a solute-binding protein (BtuF).

The protein resides in the periplasm. Its function is as follows. Part of the ABC transporter complex BtuCDF involved in vitamin B12 import. Binds vitamin B12 and delivers it to the periplasmic surface of BtuC. This is Vitamin B12-binding protein from Yersinia pestis bv. Antiqua (strain Antiqua).